The primary structure comprises 875 residues: Probable inorganic carbon transporter subunit DabA (875 aa).

Zn(2+) contacts are provided by Cys399, Asp401, His581, and Cys596.

Belongs to the inorganic carbon transporter (TC 9.A.2) DabA family. As to quaternary structure, forms a complex with DabB. Zn(2+) is required as a cofactor.

The protein localises to the cell membrane. Functionally, part of an energy-coupled inorganic carbon pump. The sequence is that of Probable inorganic carbon transporter subunit DabA from Bacillus thuringiensis (strain Al Hakam).